A 235-amino-acid polypeptide reads, in one-letter code: Uridylate kinase (235 aa).

Residue 9-12 (KLSG) participates in ATP binding. Gly-51 serves as a coordination point for UMP. ATP is bound by residues Gly-52 and Arg-56. UMP-binding positions include Asp-71 and 132-139 (TGNPYFTT). ATP contacts are provided by Thr-159, Tyr-165, and Asp-168.

The protein belongs to the UMP kinase family. As to quaternary structure, homohexamer.

Its subcellular location is the cytoplasm. The enzyme catalyses UMP + ATP = UDP + ADP. It participates in pyrimidine metabolism; CTP biosynthesis via de novo pathway; UDP from UMP (UMPK route): step 1/1. Inhibited by UTP. Functionally, catalyzes the reversible phosphorylation of UMP to UDP. In Cytophaga hutchinsonii (strain ATCC 33406 / DSM 1761 / CIP 103989 / NBRC 15051 / NCIMB 9469 / D465), this protein is Uridylate kinase.